The sequence spans 253 residues: MHIDVIGHGPALVLLHGWALHGGVFAPLVERLAPHYQLHLVDLPGHGFSHDDTTPLALPHVVAAIAAATPAAVWVGWSLGGLFALHAAATQPQVRALAMIAATPRFVRGSDWPDAVEREVFVQFGQDLARDYRGTLDRFLALDTLGSAHARSELRSLRETLTARGEPAASALQDGLGLLERTDLRRALATLARPSLWIAGQRDRLVPAAGMHAAAARAPHAQALTIDGGGHAPFLGHADQVAEALHRFVAALP.

Substrate is bound by residues Trp-18, Ser-78–Leu-79, and Phe-139–Asp-143. Residue Ser-78 is the Nucleophile of the active site. Catalysis depends on residues Asp-203 and His-231. His-231 is a binding site for substrate.

It belongs to the AB hydrolase superfamily. Carboxylesterase BioH family. Monomer.

It is found in the cytoplasm. It catalyses the reaction 6-carboxyhexanoyl-[ACP] methyl ester + H2O = 6-carboxyhexanoyl-[ACP] + methanol + H(+). The protein operates within cofactor biosynthesis; biotin biosynthesis. Its function is as follows. The physiological role of BioH is to remove the methyl group introduced by BioC when the pimeloyl moiety is complete. It allows to synthesize pimeloyl-ACP via the fatty acid synthetic pathway through the hydrolysis of the ester bonds of pimeloyl-ACP esters. In Xanthomonas campestris pv. campestris (strain 8004), this protein is Pimeloyl-[acyl-carrier protein] methyl ester esterase.